The following is a 225-amino-acid chain: Riboflavin kinase (225 aa).

The segment at 1–89 (MPDIEYLKKL…SRIFSSEPDT (89 aa)) is unknown. The interval 90–225 (LELEGNVLKG…LKKQGMEGQK (136 aa)) is riboflavin kinase. 99–104 (GLGEGQ) serves as a coordination point for CDP. Residues T128 and N130 each coordinate Mg(2+). 2 residues coordinate FMN: T185 and E193. Residue 198–201 (VKLR) participates in CDP binding.

This sequence belongs to the archaeal riboflavin kinase family. Mg(2+) serves as cofactor.

It carries out the reaction riboflavin + CTP = CDP + FMN + H(+). It participates in cofactor biosynthesis; FMN biosynthesis; FMN from riboflavin (CTP route): step 1/1. Its function is as follows. Catalyzes the CTP-dependent phosphorylation of riboflavin (vitamin B2) to form flavin mononucleotide (FMN). The chain is Riboflavin kinase (ribK) from Methanosarcina mazei (strain ATCC BAA-159 / DSM 3647 / Goe1 / Go1 / JCM 11833 / OCM 88) (Methanosarcina frisia).